Reading from the N-terminus, the 643-residue chain is UvrABC system protein C (643 aa).

A GIY-YIG domain is found at 25-104 (AEPGVYFMRD…IKQHQPHFNV (80 aa)). The UVR domain maps to 214-249 (SELVELLEAQMLQAAENLEFEKAAKIRDQIRGLEGL).

This sequence belongs to the UvrC family. Interacts with UvrB in an incision complex.

It localises to the cytoplasm. Functionally, the UvrABC repair system catalyzes the recognition and processing of DNA lesions. UvrC both incises the 5' and 3' sides of the lesion. The N-terminal half is responsible for the 3' incision and the C-terminal half is responsible for the 5' incision. In Synechococcus elongatus (strain ATCC 33912 / PCC 7942 / FACHB-805) (Anacystis nidulans R2), this protein is UvrABC system protein C.